The chain runs to 128 residues: Nanos homolog 1 (128 aa).

Residues 7–23 (FDSWSDYLGLSSLISRG) form an essential for its translational repressor activity region. Residues 25–52 (QPQREGERPRWDVLSPASAEPLPSNESV) are disordered. A Nanos-type zinc finger spans residues 56 to 110 (GCGFCRSNREALSLYTSHRLRALDGRVLCPVLRGYTCPLCGANGDWAHTMRYCPL). The Zn(2+) site is built by Cys57, Cys60, His73, Cys84, Cys92, Cys95, His103, and Cys108. 2 consecutive short sequence motifs (C2HC) follow at residues 57–84 (CGFCRSNREALSLYTSHRLRALDGRVLC) and 92–108 (CPLCGANGDWAHTMRYC).

It belongs to the nanos family. In terms of assembly, interacts with ccnb1. Ovary and testis.

The protein localises to the cytoplasm. It localises to the perinuclear region. Its function is as follows. Acts as a translational repressor. Can mediate repression affecting different steps in the translation process: cap-driven, IRES-driven, polyadenylated RNAs or nonpolyadenylated RNAs. Essential for the development of primordial germ cells (PGCs) by ensuring their proper migration and survival. In Xenopus laevis (African clawed frog), this protein is Nanos homolog 1 (nanos1).